The sequence spans 546 residues: CTP synthase (546 aa).

The interval 1–266 (MTTRYIFVTG…DDLVVKRFGL (266 aa)) is amidoligase domain. Residue Ser-14 coordinates CTP. Ser-14 lines the UTP pocket. ATP-binding positions include 15–20 (SLGKGI) and Asp-72. The Mg(2+) site is built by Asp-72 and Glu-140. CTP is bound by residues 147 to 149 (DIE), 187 to 192 (KTKPTQ), and Lys-223. Residues 187 to 192 (KTKPTQ) and Lys-223 contribute to the UTP site. Residue 239–241 (KDV) participates in ATP binding. Residues 291 to 542 (VIGMVGKYIE…VAAASAHQKR (252 aa)) form the Glutamine amidotransferase type-1 domain. Gly-352 serves as a coordination point for L-glutamine. Catalysis depends on Cys-379, which acts as the Nucleophile; for glutamine hydrolysis. L-glutamine-binding positions include 380-383 (LGMQ), Glu-403, and Arg-470. Catalysis depends on residues His-515 and Glu-517.

The protein belongs to the CTP synthase family. Homotetramer.

It catalyses the reaction UTP + L-glutamine + ATP + H2O = CTP + L-glutamate + ADP + phosphate + 2 H(+). The enzyme catalyses L-glutamine + H2O = L-glutamate + NH4(+). The catalysed reaction is UTP + NH4(+) + ATP = CTP + ADP + phosphate + 2 H(+). Its pathway is pyrimidine metabolism; CTP biosynthesis via de novo pathway; CTP from UDP: step 2/2. Its activity is regulated as follows. Allosterically activated by GTP, when glutamine is the substrate; GTP has no effect on the reaction when ammonia is the substrate. The allosteric effector GTP functions by stabilizing the protein conformation that binds the tetrahedral intermediate(s) formed during glutamine hydrolysis. Inhibited by the product CTP, via allosteric rather than competitive inhibition. In terms of biological role, catalyzes the ATP-dependent amination of UTP to CTP with either L-glutamine or ammonia as the source of nitrogen. Regulates intracellular CTP levels through interactions with the four ribonucleotide triphosphates. This is CTP synthase from Shewanella sp. (strain MR-4).